The primary structure comprises 445 residues: Phosphoglucosamine mutase (445 aa).

Ser102 functions as the Phosphoserine intermediate in the catalytic mechanism. Residues Ser102, Asp241, Asp243, and Asp245 each contribute to the Mg(2+) site. Ser102 is modified (phosphoserine).

It belongs to the phosphohexose mutase family. Mg(2+) is required as a cofactor. In terms of processing, activated by phosphorylation.

It carries out the reaction alpha-D-glucosamine 1-phosphate = D-glucosamine 6-phosphate. Catalyzes the conversion of glucosamine-6-phosphate to glucosamine-1-phosphate. The polypeptide is Phosphoglucosamine mutase (Serratia proteamaculans (strain 568)).